Here is a 756-residue protein sequence, read N- to C-terminus: Hormone-sensitive lipase (756 aa).

An Involved in the stabilization of the negatively charged intermediate by the formation of the oxyanion hole motif is present at residues 350 to 352; it reads HGG. Ser424 is an active-site residue. 2 disordered regions span residues 542–570 and 581–600; these read SVSK…TDSL and RNSS…ETLG. Ser552 is modified (phosphoserine; by PKA). Phosphoserine; by AMPK is present on Ser554. Positions 581–596 are enriched in polar residues; sequence RNSSDTTDTPELSLSA. 2 positions are modified to phosphoserine: Ser595 and Ser649. Active-site residues include Asp692 and His722.

This sequence belongs to the 'GDXG' lipolytic enzyme family. Monomer and homodimer. Interacts with CAVIN1 in the adipocyte cytoplasm. Interacts with PLIN5. Post-translationally, phosphorylation by AMPK reduces its translocation towards the lipid droplets.

The protein localises to the cell membrane. It localises to the membrane. The protein resides in the caveola. It is found in the cytoplasm. Its subcellular location is the cytosol. The protein localises to the lipid droplet. The catalysed reaction is a diacylglycerol + H2O = a monoacylglycerol + a fatty acid + H(+). The enzyme catalyses a triacylglycerol + H2O = a diacylglycerol + a fatty acid + H(+). It carries out the reaction a monoacylglycerol + H2O = glycerol + a fatty acid + H(+). It catalyses the reaction Hydrolyzes glycerol monoesters of long-chain fatty acids.. The catalysed reaction is 1,2-di-(9Z-octadecenoyl)-glycerol + (9Z)-octadecenoate + H(+) = 1,2,3-tri-(9Z-octadecenoyl)-glycerol + H2O. The enzyme catalyses 2,3-di-(9Z)-octadecenoyl-sn-glycerol + H2O = 2-(9Z-octadecenoyl)-glycerol + (9Z)-octadecenoate + H(+). It carries out the reaction cholesteryl (9Z-octadecenoate) + H2O = cholesterol + (9Z)-octadecenoate + H(+). It catalyses the reaction 1,2,3-tri-(9Z-octadecenoyl)-glycerol + H2O = di-(9Z)-octadecenoylglycerol + (9Z)-octadecenoate + H(+). The catalysed reaction is all-trans-retinyl hexadecanoate + H2O = all-trans-retinol + hexadecanoate + H(+). The enzyme catalyses 1,2-di-(9Z-octadecenoyl)-glycerol + H2O = (9Z-octadecenoyl)-glycerol + (9Z)-octadecenoate + H(+). It carries out the reaction 2-(5Z,8Z,11Z,14Z-eicosatetraenoyl)-glycerol + H2O = glycerol + (5Z,8Z,11Z,14Z)-eicosatetraenoate + H(+). It catalyses the reaction 1-(9Z-octadecenoyl)-glycerol + H2O = glycerol + (9Z)-octadecenoate + H(+). The catalysed reaction is 2-(9Z-octadecenoyl)-glycerol + H2O = glycerol + (9Z)-octadecenoate + H(+). The enzyme catalyses 1-O-hexadecyl-2-acetyl-sn-glycerol + H2O = 1-O-hexadecyl-sn-glycerol + acetate + H(+). It carries out the reaction 1,2-di-(9Z-octadecenoyl)-sn-glycerol + H2O = (9Z-octadecenoyl)-glycerol + (9Z)-octadecenoate + H(+). It catalyses the reaction 1,3-di-(9Z-octadecenoyl)-glycerol + H2O = 1-(9Z-octadecenoyl)-glycerol + (9Z)-octadecenoate + H(+). The catalysed reaction is 1,2-di-(9Z-octadecenoyl)-glycerol + H2O = 2-(9Z-octadecenoyl)-glycerol + (9Z)-octadecenoate + H(+). It participates in glycerolipid metabolism; triacylglycerol degradation. Functionally, lipase with broad substrate specificity, catalyzing the hydrolysis of triacylglycerols (TAGs), diacylglycerols (DAGs), monoacylglycerols (MAGs), cholesteryl esters and retinyl esters. Shows a preferential hydrolysis of DAGs over TAGs and MAGs. Preferentially hydrolyzes fatty acid (FA) esters at the sn-3 position of the glycerol backbone in DAGs and FA esters at the sn-1 and sn-2 positions of the glycerol backbone in TAGs. Catalyzes the hydrolysis of 2-arachidonoylglycerol, an endocannabinoid and of 2-acetyl monoalkylglycerol ether, the penultimate precursor of the pathway for de novo synthesis of platelet-activating factor. In adipose tissue and heart, it primarily hydrolyzes stored triglycerides to free fatty acids, while in steroidogenic tissues, it principally converts cholesteryl esters to free cholesterol for steroid hormone production. This chain is Hormone-sensitive lipase (LIPE), found in Bos taurus (Bovine).